Consider the following 542-residue polypeptide: DNA-binding protein modulo (542 aa).

The interval 1-166 (MAQKKAVTVK…RGIPKVKVGK (166 aa)) is disordered. Phosphoserine occurs at positions 42 and 44. A compositionally biased stretch (acidic residues) spans 59 to 114 (SEEDESDVEEQNDEQPGDDSDFETEEAAGLIDDEAEEDEEYNSDDEEDDDDDELEP). Residues Ser-120, Ser-129, and Ser-142 each carry the phosphoserine modification. Over residues 123 to 135 (ADEVDESDDDEEA) the composition is skewed to acidic residues. Residues 136–158 (PVEKPVSKKSEKANSEKSEENRG) show a composition bias toward basic and acidic residues. RRM domains are found at residues 175–251 (QIVF…QPRN), 258–331 (RTVV…RISQ), 340–429 (LTLV…NLTS), and 420–489 (RAIL…PNSL). Position 304 is a phosphoserine (Ser-304). The residue at position 330 (Ser-330) is a Phosphoserine; by PKA. The residue at position 443 (Ser-443) is a Phosphoserine. A disordered region spans residues 505 to 542 (RAPRKFQKDTKPNFGKKPFNKRPAQENGGKSFVKRARF).

In terms of processing, the N-terminus is blocked.

The protein localises to the nucleus. Functionally, its capacity to bind DNA and protein(s), and its differential expression during development suggest a role in the regulation of gene expression during Drosophila development. It could, in interaction with other factors, be required for the translation of instructions provided by pattern forming genes and controls, via chromatin changes, the activity of genes critical for the process of morphogenesis of several embryonic territories. The protein is DNA-binding protein modulo (mod) of Drosophila melanogaster (Fruit fly).